Consider the following 467-residue polypeptide: Ankyrin repeat and SOCS box protein 10 (467 aa).

ANK repeat units lie at residues 115–144, 147–176, 180–209, 214–243, 247–289, 293–322, and 326–361; these read ELTTPLHVAASRGHTEVLRLLLRRRARPDS, GGRTALHEACAAGHTACVHVLLVAGADPNI, DGKRPLHLCRGPGTLECAELLLRFGARVDG, EEETPLHVAARLGHVELADLLLRRGACPDA, EGWT…DADA, DKQRPLHLACRRGHAAVVELLLSCGVSANT, and GGHTPLHCALQGPAAALAQSPEHVVRALLNHGAVRV. The SOCS box domain maps to 412–464; it reads YSSLFALVRQPRSLQHLSRCALRSHLEGSLPQALPRLPLPPRLLRYLQLDFEG.

Belongs to the ankyrin SOCS box (ASB) family. Expressed in the eye. The highest expression is observed in the iris, with moderate levels in the trabecular meshwork (TM), the lamina, and the optic nerve; slightly lower levels in the ciliary body, retina, and choroid; and very low levels in the lens.

It is found in the cytoplasm. Its subcellular location is the nucleus. It participates in protein modification; protein ubiquitination. In terms of biological role, may be a substrate-recognition component of a SCF-like ECS (Elongin-Cullin-SOCS-box protein) E3 ubiquitin-protein ligase complex which mediates the ubiquitination and subsequent proteasomal degradation of target proteins. This chain is Ankyrin repeat and SOCS box protein 10 (ASB10), found in Homo sapiens (Human).